The sequence spans 107 residues: Large ribosomal subunit protein P1 (107 aa).

The segment covering 67–82 (GPASAAPAGAAGAAAP) has biased composition (low complexity). The tract at residues 67–107 (GPASAAPAGAAGAAAPAEEKAEEKEEEKEESDEDMGFGLFD) is disordered. Positions 90–101 (KEEEKEESDEDM) are enriched in acidic residues.

It belongs to the eukaryotic ribosomal protein P1/P2 family. In terms of assembly, P1 and P2 exist as dimers at the large ribosomal subunit.

The protein localises to the cytoplasm. Plays an important role in the elongation step of protein synthesis. This is Large ribosomal subunit protein P1 from Penicillium crustosum (Blue mold fungus).